We begin with the raw amino-acid sequence, 270 residues long: Acyl-[acyl-carrier-protein]--UDP-N-acetylglucosamine O-acyltransferase (270 aa).

This sequence belongs to the transferase hexapeptide repeat family. LpxA subfamily. As to quaternary structure, homotrimer.

Its subcellular location is the cytoplasm. It catalyses the reaction a (3R)-hydroxyacyl-[ACP] + UDP-N-acetyl-alpha-D-glucosamine = a UDP-3-O-[(3R)-3-hydroxyacyl]-N-acetyl-alpha-D-glucosamine + holo-[ACP]. The protein operates within glycolipid biosynthesis; lipid IV(A) biosynthesis; lipid IV(A) from (3R)-3-hydroxytetradecanoyl-[acyl-carrier-protein] and UDP-N-acetyl-alpha-D-glucosamine: step 1/6. In terms of biological role, involved in the biosynthesis of lipid A, a phosphorylated glycolipid that anchors the lipopolysaccharide to the outer membrane of the cell. The protein is Acyl-[acyl-carrier-protein]--UDP-N-acetylglucosamine O-acyltransferase of Helicobacter pylori (strain HPAG1).